A 546-amino-acid polypeptide reads, in one-letter code: EH domain-containing protein 2 (546 aa).

EF-hand domains lie at Glu-15–Ser-50 and Arg-51–Ala-84. One can recognise an EH domain in the interval His-16–Leu-94. Residues Asp-28, Asp-30, Asp-32, Arg-34, Asp-39, Asp-62, and Glu-73 each contribute to the Ca(2+) site. The region spanning Phe-194 to Lys-430 is the Dynamin-type G domain. Positions Gly-204 to Thr-211 are G1 motif. Residue Gly-204–Thr-211 participates in GTP binding. Positions Glu-230–Pro-231 are G2 motif. The tract at residues Asp-292–Gly-295 is G3 motif. GTP is bound by residues Asp-292 to Val-296 and Lys-359. The interval Asn-358 to Asp-361 is G4 motif. Position 382 (Val-382) is a region of interest, G5 motif. Ser-395–Asp-398 is a binding site for GTP. The short motif at Pro-429–Lys-436 is the Nuclear localization signal element. The stretch at Lys-467–His-490 forms a coiled coil.

It belongs to the TRAFAC class dynamin-like GTPase superfamily. Dynamin/Fzo/YdjA family. EHD subfamily. In terms of assembly, homooligomer, and heterooligomer with EHD1. Interacts with AP-4 complex subunit sigma (At2g19790).

It is found in the endosome membrane. Its subcellular location is the cell membrane. The protein resides in the nucleus. It localises to the cytoplasm. The enzyme catalyses GTP + H2O = GDP + phosphate + H(+). In terms of biological role, involved in endocytosis negative regulation, probably by influencing actin organization. Acts in early endocytic membrane fusion and membrane trafficking of recycling endosomes. Exhibits an inhibitory effect on endocytosis when over-expressed. This chain is EH domain-containing protein 2, found in Arabidopsis thaliana (Mouse-ear cress).